Reading from the N-terminus, the 657-residue chain is N-acetylgalactosaminyltransferase 7 (657 aa).

Over 1–6 (MRLKIG) the chain is Cytoplasmic. A helical; Signal-anchor for type II membrane protein membrane pass occupies residues 7 to 29 (FILRSLLVVGSFLGLVVLWSSLT). Topologically, residues 30–657 (PRPDDPSPLS…KWEMNNIHSV (628 aa)) are lumenal. The interval 31 to 65 (RPDDPSPLSRMREDRDVNDPMPNRGGNGLAPGEDR) is disordered. Disulfide bonds link C197/C435, C426/C507, C545/C562, C585/C600, and C625/C640. Residues 206–317 (LLTSSVVIVF…VNWYAPLVAP (112 aa)) are catalytic subdomain A. Substrate is bound by residues D247 and R277. D301 and H303 together coordinate Mn(2+). Residues 381–443 (PYRSPAMAGG…PCSRVGHIYR (63 aa)) form a catalytic subdomain B region. Substrate is bound at residue W412. H440 provides a ligand contact to Mn(2+). R443 serves as a coordination point for substrate. Residues 532–652 (VDWGEIRGFE…SKTTQKWEMN (121 aa)) enclose the Ricin B-type lectin domain.

It belongs to the glycosyltransferase 2 family. GalNAc-T subfamily. Mn(2+) serves as cofactor. In terms of tissue distribution, widely expressed. Expressed in uterus, retina, kidney, small intestine, omentum, stomach and CNS.

Its subcellular location is the golgi apparatus membrane. It catalyses the reaction L-seryl-[protein] + UDP-N-acetyl-alpha-D-galactosamine = a 3-O-[N-acetyl-alpha-D-galactosaminyl]-L-seryl-[protein] + UDP + H(+). The enzyme catalyses L-threonyl-[protein] + UDP-N-acetyl-alpha-D-galactosamine = a 3-O-[N-acetyl-alpha-D-galactosaminyl]-L-threonyl-[protein] + UDP + H(+). It functions in the pathway protein modification; protein glycosylation. Its function is as follows. Glycopeptide transferase involved in O-linked oligosaccharide biosynthesis, which catalyzes the transfer of an N-acetyl-D-galactosamine residue to an already glycosylated peptide. In contrast to other proteins of the family, it does not act as a peptide transferase that transfers GalNAc onto serine or threonine residue on the protein receptor, but instead requires the prior addition of a GalNAc on a peptide before adding additional GalNAc moieties. Some peptide transferase activity is however not excluded, considering that its appropriate peptide substrate may remain unidentified. This Homo sapiens (Human) protein is N-acetylgalactosaminyltransferase 7 (GALNT7).